The following is a 183-amino-acid chain: Ubiquitin-conjugating enzyme E2 6 (183 aa).

The 148-residue stretch at 1 to 148 folds into the UBC core domain; it reads MASPSKRREM…VKEYCEKYAK (148 aa). C85 functions as the Glycyl thioester intermediate in the catalytic mechanism. Positions 148 to 183 are disordered; it reads KPEEILSDDDDDDSMSEDGSDSDDDDDDEIVGKADP. Residues 152–176 show a composition bias toward acidic residues; sequence ILSDDDDDDSMSEDGSDSDDDDDDE.

Belongs to the ubiquitin-conjugating enzyme family. As to expression, expressed in roots, petals, sepals and silique walls.

It carries out the reaction S-ubiquitinyl-[E1 ubiquitin-activating enzyme]-L-cysteine + [E2 ubiquitin-conjugating enzyme]-L-cysteine = [E1 ubiquitin-activating enzyme]-L-cysteine + S-ubiquitinyl-[E2 ubiquitin-conjugating enzyme]-L-cysteine.. It functions in the pathway protein modification; protein ubiquitination. Functionally, accepts the ubiquitin from the E1 complex and catalyzes its covalent attachment to other proteins. In Arabidopsis thaliana (Mouse-ear cress), this protein is Ubiquitin-conjugating enzyme E2 6 (UBC6).